The sequence spans 404 residues: Probable tRNA sulfurtransferase (404 aa).

In terms of domain architecture, THUMP spans 61–166 (EAVSERLKDV…SGYSYIMCDE (106 aa)). Residues 184-185 (LL), 209-210 (HF), arginine 266, glycine 288, and glutamine 297 each bind ATP.

This sequence belongs to the ThiI family.

The protein resides in the cytoplasm. The enzyme catalyses [ThiI sulfur-carrier protein]-S-sulfanyl-L-cysteine + a uridine in tRNA + 2 reduced [2Fe-2S]-[ferredoxin] + ATP + H(+) = [ThiI sulfur-carrier protein]-L-cysteine + a 4-thiouridine in tRNA + 2 oxidized [2Fe-2S]-[ferredoxin] + AMP + diphosphate. It catalyses the reaction [ThiS sulfur-carrier protein]-C-terminal Gly-Gly-AMP + S-sulfanyl-L-cysteinyl-[cysteine desulfurase] + AH2 = [ThiS sulfur-carrier protein]-C-terminal-Gly-aminoethanethioate + L-cysteinyl-[cysteine desulfurase] + A + AMP + 2 H(+). It participates in cofactor biosynthesis; thiamine diphosphate biosynthesis. In terms of biological role, catalyzes the ATP-dependent transfer of a sulfur to tRNA to produce 4-thiouridine in position 8 of tRNAs, which functions as a near-UV photosensor. Also catalyzes the transfer of sulfur to the sulfur carrier protein ThiS, forming ThiS-thiocarboxylate. This is a step in the synthesis of thiazole, in the thiamine biosynthesis pathway. The sulfur is donated as persulfide by IscS. The protein is Probable tRNA sulfurtransferase of Bacillus cereus (strain AH187).